A 388-amino-acid chain; its full sequence is MKTIQEQLPNDLVEEILCRVPATSLRRLRSTCKAWNRLFKGDRILASKHFEKSAKQFRSLSLRNDYRIFPISFNLHGNSPSLELKSELIDPHSKNSAAPFEISRVIHCEGLLLCSSQLDESRVVVWNPLTGETRWIRTGDFRQKGRSFDVGYYYQKDKRSWIKSYKLLCYYRGTKYFEIYDFDSDSWRILDDIIAPRGSIGYSELSVSLKGNTYWFAKGVTEERPRTISLLKFDFYTEKSVPVLLPYQSRRLFQASSLSVVREDKLSVLLQLDQSSKTEIWVTNVIDETTKGAVSWTKVLALDLSPHLQIGNDGSFFLGEDKKVVMFCEKLIDENKVKDMVYIVGEDNVVTEVGFGVDEMDGCRAVILNYVPSLVQIERAGGNRKRGH.

Residues 2 to 48 form the F-box domain; it reads KTIQEQLPNDLVEEILCRVPATSLRRLRSTCKAWNRLFKGDRILASK.

Interacts with EIN2 (via C-terminus).

In terms of biological role, negative regulator of EIN2 protein stability. This is F-box protein ETP2 from Arabidopsis thaliana (Mouse-ear cress).